A 147-amino-acid chain; its full sequence is Phosphoribosyl-AMP cyclohydrolase (147 aa).

Position 91 (Asp91) interacts with Mg(2+). Residue Cys92 participates in Zn(2+) binding. Mg(2+) contacts are provided by Asp93 and Asp95. Residues Cys109 and Cys116 each coordinate Zn(2+).

It belongs to the PRA-CH family. Homodimer. Mg(2+) serves as cofactor. The cofactor is Zn(2+).

It localises to the cytoplasm. The catalysed reaction is 1-(5-phospho-beta-D-ribosyl)-5'-AMP + H2O = 1-(5-phospho-beta-D-ribosyl)-5-[(5-phospho-beta-D-ribosylamino)methylideneamino]imidazole-4-carboxamide. Its pathway is amino-acid biosynthesis; L-histidine biosynthesis; L-histidine from 5-phospho-alpha-D-ribose 1-diphosphate: step 3/9. In terms of biological role, catalyzes the hydrolysis of the adenine ring of phosphoribosyl-AMP. This Rhodopseudomonas palustris (strain BisA53) protein is Phosphoribosyl-AMP cyclohydrolase.